The sequence spans 221 residues: Pyridoxine/pyridoxamine 5'-phosphate oxidase (221 aa).

Substrate contacts are provided by residues 14–17 (RNEY) and K73. FMN is bound by residues 68–73 (RTVLLK), 83–84 (FT), K90, and Q112. Substrate is bound by residues Y130, R134, and S138. Residues 147-148 (QS) and W193 contribute to the FMN site. 199–201 (RLH) contributes to the substrate binding site. R203 contributes to the FMN binding site.

The protein belongs to the pyridoxamine 5'-phosphate oxidase family. Homodimer. FMN serves as cofactor.

The enzyme catalyses pyridoxamine 5'-phosphate + O2 + H2O = pyridoxal 5'-phosphate + H2O2 + NH4(+). It catalyses the reaction pyridoxine 5'-phosphate + O2 = pyridoxal 5'-phosphate + H2O2. The protein operates within cofactor metabolism; pyridoxal 5'-phosphate salvage; pyridoxal 5'-phosphate from pyridoxamine 5'-phosphate: step 1/1. It participates in cofactor metabolism; pyridoxal 5'-phosphate salvage; pyridoxal 5'-phosphate from pyridoxine 5'-phosphate: step 1/1. Catalyzes the oxidation of either pyridoxine 5'-phosphate (PNP) or pyridoxamine 5'-phosphate (PMP) into pyridoxal 5'-phosphate (PLP). This is Pyridoxine/pyridoxamine 5'-phosphate oxidase from Salinispora arenicola (strain CNS-205).